The chain runs to 449 residues: Protein translocase subunit SecD (449 aa).

6 helical membrane passes run Gly-6–Thr-26, Leu-272–Tyr-292, Leu-294–Phe-314, Val-317–Val-337, Thr-379–Val-399, and Gly-401–Thr-421.

It belongs to the SecD/SecF family. SecD subfamily. Forms a complex with SecF. Part of the essential Sec protein translocation apparatus which comprises SecA, SecYEG and auxiliary proteins SecDF. Other proteins may also be involved.

The protein localises to the cell membrane. Functionally, part of the Sec protein translocase complex. Interacts with the SecYEG preprotein conducting channel. SecDF uses the proton motive force (PMF) to complete protein translocation after the ATP-dependent function of SecA. The polypeptide is Protein translocase subunit SecD (Dehalococcoides mccartyi (strain VS)).